Here is an 863-residue protein sequence, read N- to C-terminus: FO synthase (863 aa).

Radical SAM core domains are found at residues 91–343 (ITYS…APPN) and 551–792 (VTFV…SHIQ). The cofG-like stretch occupies residues 92-424 (TYSRKVFIPV…PRVRGHVVAL (333 aa)). Positions 105, 109, 112, 565, 569, and 572 each coordinate [4Fe-4S] cluster. The cofH-like stretch occupies residues 528–861 (DGPALEAVTA…RQRTTTYALR (334 aa)).

This sequence in the N-terminal section; belongs to the radical SAM superfamily. CofG family. The protein in the C-terminal section; belongs to the radical SAM superfamily. CofH family. It depends on [4Fe-4S] cluster as a cofactor.

The catalysed reaction is 5-amino-6-(D-ribitylamino)uracil + L-tyrosine + S-adenosyl-L-methionine = 5-amino-5-(4-hydroxybenzyl)-6-(D-ribitylimino)-5,6-dihydrouracil + 2-iminoacetate + 5'-deoxyadenosine + L-methionine + H(+). It catalyses the reaction 5-amino-5-(4-hydroxybenzyl)-6-(D-ribitylimino)-5,6-dihydrouracil + S-adenosyl-L-methionine = 7,8-didemethyl-8-hydroxy-5-deazariboflavin + 5'-deoxyadenosine + L-methionine + NH4(+) + H(+). Its pathway is cofactor biosynthesis; coenzyme F0 biosynthesis. In terms of biological role, catalyzes the radical-mediated synthesis of 7,8-didemethyl-8-hydroxy-5-deazariboflavin (FO) from 5-amino-6-(D-ribitylamino)uracil and L-tyrosine. This chain is FO synthase (fbiC), found in Mycobacterium leprae (strain TN).